Consider the following 302-residue polypeptide: Ornithine carbamoyltransferase (302 aa).

Carbamoyl phosphate is bound by residues 53–56 (STRT), Gln-80, Arg-104, and 131–134 (HPCQ). L-ornithine is bound by residues Asn-162, Asp-219, and 223–224 (SM). Carbamoyl phosphate-binding positions include 259–260 (CL) and Arg-287.

This sequence belongs to the aspartate/ornithine carbamoyltransferase superfamily. OTCase family.

It localises to the cytoplasm. It carries out the reaction carbamoyl phosphate + L-ornithine = L-citrulline + phosphate + H(+). The protein operates within amino-acid biosynthesis; L-arginine biosynthesis; L-arginine from L-ornithine and carbamoyl phosphate: step 1/3. Reversibly catalyzes the transfer of the carbamoyl group from carbamoyl phosphate (CP) to the N(epsilon) atom of ornithine (ORN) to produce L-citrulline. The sequence is that of Ornithine carbamoyltransferase from Hydrogenovibrio crunogenus (strain DSM 25203 / XCL-2) (Thiomicrospira crunogena).